The primary structure comprises 476 residues: Salicylate biosynthesis isochorismate synthase (476 aa).

Residues 181–202 (RRRPSGPTAGAQGDASAQERRQ) are disordered.

This sequence belongs to the isochorismate synthase family.

It carries out the reaction chorismate = isochorismate. It functions in the pathway siderophore biosynthesis; salicylate biosynthesis. In terms of biological role, involved in the conversion of chorismate to salicylate. This is Salicylate biosynthesis isochorismate synthase (pchA) from Pseudomonas aeruginosa (strain ATCC 15692 / DSM 22644 / CIP 104116 / JCM 14847 / LMG 12228 / 1C / PRS 101 / PAO1).